A 284-amino-acid polypeptide reads, in one-letter code: Malonyl-[acyl-carrier protein] O-methyltransferase (284 aa).

The protein belongs to the methyltransferase superfamily.

It catalyses the reaction malonyl-[ACP] + S-adenosyl-L-methionine = malonyl-[ACP] methyl ester + S-adenosyl-L-homocysteine. It participates in cofactor biosynthesis; biotin biosynthesis. In terms of biological role, converts the free carboxyl group of a malonyl-thioester to its methyl ester by transfer of a methyl group from S-adenosyl-L-methionine (SAM). It allows to synthesize pimeloyl-ACP via the fatty acid synthetic pathway. This chain is Malonyl-[acyl-carrier protein] O-methyltransferase, found in Legionella pneumophila subsp. pneumophila (strain Philadelphia 1 / ATCC 33152 / DSM 7513).